Reading from the N-terminus, the 276-residue chain is Large ribosomal subunit protein uL2 (276 aa).

Positions 224–276 are disordered; that stretch reads VMNPVDHPHGGGEGKAPIGRKSPMTPWGKPTLGYKTRKKKNKSDKFIIRRRKK. Basic residues predominate over residues 258–276; it reads KTRKKKNKSDKFIIRRRKK.

This sequence belongs to the universal ribosomal protein uL2 family. As to quaternary structure, part of the 50S ribosomal subunit. Forms a bridge to the 30S subunit in the 70S ribosome.

In terms of biological role, one of the primary rRNA binding proteins. Required for association of the 30S and 50S subunits to form the 70S ribosome, for tRNA binding and peptide bond formation. It has been suggested to have peptidyltransferase activity; this is somewhat controversial. Makes several contacts with the 16S rRNA in the 70S ribosome. The chain is Large ribosomal subunit protein uL2 from Geobacillus kaustophilus (strain HTA426).